The primary structure comprises 283 residues: Acetylglutamate kinase (283 aa).

Residues 64-65 (GG), R86, and N178 contribute to the substrate site.

This sequence belongs to the acetylglutamate kinase family. ArgB subfamily.

It is found in the cytoplasm. The catalysed reaction is N-acetyl-L-glutamate + ATP = N-acetyl-L-glutamyl 5-phosphate + ADP. The protein operates within amino-acid biosynthesis; L-arginine biosynthesis; N(2)-acetyl-L-ornithine from L-glutamate: step 2/4. Functionally, catalyzes the ATP-dependent phosphorylation of N-acetyl-L-glutamate. This Lactococcus lactis subsp. cremoris (strain MG1363) protein is Acetylglutamate kinase.